The sequence spans 176 residues: Probable Brix domain-containing ribosomal biogenesis protein (176 aa).

One can recognise a Brix domain in the interval 6-176 (IEIVFTSSRD…QLYDRNKNIN (171 aa)).

Probably involved in the biogenesis of the ribosome. The sequence is that of Probable Brix domain-containing ribosomal biogenesis protein from Sulfurisphaera tokodaii (strain DSM 16993 / JCM 10545 / NBRC 100140 / 7) (Sulfolobus tokodaii).